The following is a 274-amino-acid chain: Oxidoreductase BOA17 (274 aa).

5 residues coordinate NADP(+): Leu14, Thr32, Asp57, Asn84, and Lys117. Catalysis depends on proton donor residues Ser135 and Tyr149. Tyr149, Lys153, Ile182, and Thr184 together coordinate NADP(+). Residue Lys153 is the Lowers pKa of active site Tyr of the active site.

It belongs to the short-chain dehydrogenases/reductases (SDR) family.

Its pathway is polyketide biosynthesis. Functionally, oxidoreductase; part of the gene cluster B that mediates the biosynthesis of botcinic acid and its botcinin derivatives, acetate-derived polyketides that contribute to virulence when combined with the sesquiterpene botrydial. Botcinic acid and its derivatives have been shown to induce chlorosis and necrosis during host plant infection, but also have antifungal activities. Two polyketide synthases, BOA6 and BOA9, are involved in the biosynthesis of botcinins. BOA6 mediates the formation of the per-methylated tetraketide core by condensation of four units of malonyl-CoA with one unit of acetyl-CoA, which would be methylated in activated methylene groups to yield a bicyclic acid intermediate that could then either be converted to botrylactone derivatives or lose the starter acetate unit through a retro-Claisen type C-C bond cleavage to yield botcinin derivatives. The second polyketide synthase, BOA9, is probably required for the biosynthesis of the tetraketide side chain of botcinins. The methyltransferase (MT) domain within BOA6 is probably responsible for the incorporation of four methyl groups. The trans-enoyl reductase BOA5 might take over the enoyl reductase function of BOA6 that misses an ER domain. The monooxygenases BOA2, BOA3 and BOA4 might be involved in further hydroxylations at C4, C5 and C8, whereas BOA7, close to BOA9, could potentially be involved in the hydroxylation at C4 in the side chain of botcinins. The chain is Oxidoreductase BOA17 from Botryotinia fuckeliana (strain B05.10) (Noble rot fungus).